A 276-amino-acid polypeptide reads, in one-letter code: Putative pyruvate, phosphate dikinase regulatory protein (276 aa).

153–160 contacts ADP; sequence GISRTSKT.

The protein belongs to the pyruvate, phosphate/water dikinase regulatory protein family. PDRP subfamily.

The enzyme catalyses N(tele)-phospho-L-histidyl/L-threonyl-[pyruvate, phosphate dikinase] + ADP = N(tele)-phospho-L-histidyl/O-phospho-L-threonyl-[pyruvate, phosphate dikinase] + AMP + H(+). The catalysed reaction is N(tele)-phospho-L-histidyl/O-phospho-L-threonyl-[pyruvate, phosphate dikinase] + phosphate + H(+) = N(tele)-phospho-L-histidyl/L-threonyl-[pyruvate, phosphate dikinase] + diphosphate. Functionally, bifunctional serine/threonine kinase and phosphorylase involved in the regulation of the pyruvate, phosphate dikinase (PPDK) by catalyzing its phosphorylation/dephosphorylation. This Brucella anthropi (strain ATCC 49188 / DSM 6882 / CCUG 24695 / JCM 21032 / LMG 3331 / NBRC 15819 / NCTC 12168 / Alc 37) (Ochrobactrum anthropi) protein is Putative pyruvate, phosphate dikinase regulatory protein.